Here is a 719-residue protein sequence, read N- to C-terminus: Pesticidal crystal protein Cry1Ia (719 aa).

It belongs to the delta endotoxin family.

In terms of biological role, promotes colloidosmotic lysis by binding to the midgut epithelial cells of certain coleopteran and lepidopteran species. Active on Plutella xylostella and Bombyx mori. In Bacillus thuringiensis subsp. kurstaki, this protein is Pesticidal crystal protein Cry1Ia (cry1Ia).